The following is a 204-amino-acid chain: RNA-free ribonuclease P (204 aa).

Belongs to the HARP family.

The enzyme catalyses Endonucleolytic cleavage of RNA, removing 5'-extranucleotides from tRNA precursor.. Functionally, RNA-free RNase P that catalyzes the removal of the 5'-leader sequence from pre-tRNA to produce the mature 5'-terminus. This Pyrococcus horikoshii (strain ATCC 700860 / DSM 12428 / JCM 9974 / NBRC 100139 / OT-3) protein is RNA-free ribonuclease P.